A 233-amino-acid chain; its full sequence is Ion-translocating oxidoreductase complex subunit E (233 aa).

Helical transmembrane passes span 18 to 38 (ALVQ…ATNA), 39 to 59 (LGLG…VSAL), 69 to 89 (IPIY…LINA), 92 to 112 (FGLY…CIVI), 128 to 148 (ALDG…LGAL), and 182 to 202 (PFLL…LLAG).

The protein belongs to the NqrDE/RnfAE family. The complex is composed of six subunits: RnfA, RnfB, RnfC, RnfD, RnfE and RnfG.

The protein localises to the cell inner membrane. In terms of biological role, part of a membrane-bound complex that couples electron transfer with translocation of ions across the membrane. This Yersinia pseudotuberculosis serotype IB (strain PB1/+) protein is Ion-translocating oxidoreductase complex subunit E.